The primary structure comprises 160 residues: Phosphopantetheine adenylyltransferase (160 aa).

Thr-11 contacts substrate. ATP contacts are provided by residues Thr-11–Phe-12 and His-19. Substrate-binding residues include Lys-43, Thr-75, and Arg-89. Residues Gly-90 to Arg-92, Glu-100, and Tyr-125 to Ser-131 each bind ATP.

The protein belongs to the bacterial CoaD family. As to quaternary structure, homohexamer. Mg(2+) is required as a cofactor.

It localises to the cytoplasm. The enzyme catalyses (R)-4'-phosphopantetheine + ATP + H(+) = 3'-dephospho-CoA + diphosphate. It functions in the pathway cofactor biosynthesis; coenzyme A biosynthesis; CoA from (R)-pantothenate: step 4/5. Functionally, reversibly transfers an adenylyl group from ATP to 4'-phosphopantetheine, yielding dephospho-CoA (dPCoA) and pyrophosphate. This is Phosphopantetheine adenylyltransferase from Listeria monocytogenes serotype 4b (strain CLIP80459).